The sequence spans 101 residues: MSSFILKFLWLEKSVAVGLDQKIGDRTTPVTEFFFWPQHDAWEEMKNFLEDKSWIDQSEVVILLNQITEVINYWQEKTELQKRDISHLTEKFPNVVFVGFD.

The protein belongs to the chloroplast-specific ribosomal protein cS23 family. Part of the 30S ribosomal subunit.

The protein resides in the plastid. Its subcellular location is the chloroplast. Probably a ribosomal protein or a ribosome-associated protein. This chain is Small ribosomal subunit protein cS23 (ycf65), found in Euglena stellata.